The chain runs to 602 residues: uncharacterized protein (602 aa).

The Helicase ATP-binding domain occupies 51–210 (QYLGTQPRDF…PFVSYQPDAD (160 aa)). Residues 430–439 (PHRESAHDPL) are compositionally biased toward basic and acidic residues. Disordered stretches follow at residues 430 to 452 (PHRESAHDPLDGDPATRTQTERG) and 518 to 538 (RAQLQKGATQPATSGASASVH). Polar residues predominate over residues 523–534 (KGATQPATSGAS).

To M.leprae ML1624.

This is an uncharacterized protein from Mycobacterium tuberculosis (strain CDC 1551 / Oshkosh).